The sequence spans 400 residues: Nicotinate phosphoribosyltransferase (400 aa).

His-220 carries the phosphohistidine; by autocatalysis modification.

The protein belongs to the NAPRTase family. Post-translationally, transiently phosphorylated on a His residue during the reaction cycle. Phosphorylation strongly increases the affinity for substrates and increases the rate of nicotinate D-ribonucleotide production. Dephosphorylation regenerates the low-affinity form of the enzyme, leading to product release.

It catalyses the reaction nicotinate + 5-phospho-alpha-D-ribose 1-diphosphate + ATP + H2O = nicotinate beta-D-ribonucleotide + ADP + phosphate + diphosphate. Its pathway is cofactor biosynthesis; NAD(+) biosynthesis; nicotinate D-ribonucleotide from nicotinate: step 1/1. Catalyzes the synthesis of beta-nicotinate D-ribonucleotide from nicotinate and 5-phospho-D-ribose 1-phosphate at the expense of ATP. In Salmonella dublin (strain CT_02021853), this protein is Nicotinate phosphoribosyltransferase.